We begin with the raw amino-acid sequence, 302 residues long: DDRGK domain-containing protein 1 (302 aa).

At 1–5 (MDGGG) the chain is on the lumenal side. The helical transmembrane segment at 6–26 (GMLGAVVCLLLVFAIFPLLLW) threads the bilayer. Over 27-302 (RRRSDAAHRL…DENAAAGTEL (276 aa)) the chain is Cytoplasmic. 2 disordered regions span residues 36–151 (LPPQ…EEAR) and 279–302 (DLEP…GTEL). The segment covering 79 to 91 (VDDADSDLEEEIQ) has biased composition (acidic residues). Over residues 103–151 (KRQDREAQRQAEEAARDSRRTKQDRYAEMRRKKDEEREAQERLMEEEAR) the composition is skewed to basic and acidic residues.

It belongs to the DDRGK1 family.

It is found in the endoplasmic reticulum membrane. Functionally, substrate adapter for ufmylation, the covalent attachment of the ubiquitin-like modifier UFM1 to substrate proteins. In Oryza sativa subsp. japonica (Rice), this protein is DDRGK domain-containing protein 1.